Here is a 309-residue protein sequence, read N- to C-terminus: tRNA pseudouridine synthase B (309 aa).

Residue Asp-51 is the Nucleophile of the active site.

This sequence belongs to the pseudouridine synthase TruB family. Type 1 subfamily.

The catalysed reaction is uridine(55) in tRNA = pseudouridine(55) in tRNA. Responsible for synthesis of pseudouridine from uracil-55 in the psi GC loop of transfer RNAs. The protein is tRNA pseudouridine synthase B of Coxiella burnetii (strain RSA 493 / Nine Mile phase I).